A 127-amino-acid chain; its full sequence is Large ribosomal subunit protein bL17 (127 aa).

Belongs to the bacterial ribosomal protein bL17 family. Part of the 50S ribosomal subunit. Contacts protein L32.

The chain is Large ribosomal subunit protein bL17 from Vibrio vulnificus (strain CMCP6).